We begin with the raw amino-acid sequence, 137 residues long: MASMNDFIGRWKLVQTENFDEYMKEIGVGLITRKAAAHLKPILEIRLDGETWNFDQFSTFKNTKLSFKLGEEFVENSPDDRTYNSLFTFENGKLTHRQNKIKENHKSSVLTTWLENGKLIQTYQSGDVICRREWERE.

The protein belongs to the calycin superfamily. Fatty-acid binding protein (FABP) family.

In Caenorhabditis elegans, this protein is Fatty acid-binding protein homolog 7 (lbp-7).